A 1515-amino-acid chain; its full sequence is Apolipophorin (1515 aa).

The VWFD domain maps to 952–1118; that stretch reads LRGVVVNGQH…NSYRLASSCP (167 aa). A disulfide bond links Cys976 and Cys1117. Residue Asn988 is glycosylated (N-linked (GlcNAc...) asparagine).

Hemolymph.

It is found in the secreted. Its function is as follows. Mediates transport for various types of lipids in hemolymph. Acts by forming lipoprotein particles that bind lipoproteins and lipids. Binds the A.niger cell wall component alpha-1,3-glucan, a fungal pathogen-associated molecular pattern (PAMP) that activates the host immune response. The protein is Apolipophorin of Galleria mellonella (Greater wax moth).